The following is a 373-amino-acid chain: Peptide chain release factor 1-like, mitochondrial (373 aa).

Residues 1 to 13 (MRSGFLRSARRLW) constitute a mitochondrion transit peptide. Positions 56-111 (QLAAAARLLNEKERELRDTESLLHDENEDLKKLAESEIALCQKEIAELKHRIISLL) form a coiled coil. The segment at 229-293 (PKDLRIDTKR…LRARLYSMRL (65 aa)) is GGQ domain. Positions 243–245 (GGQ) match the GGQ motif. N5-methylglutamine is present on Gln245.

This sequence belongs to the prokaryotic/mitochondrial release factor family. In terms of processing, methylation of glutamine in the GGQ triplet by HEMK1 is conserved from bacteria to mammals.

It is found in the mitochondrion. Mitochondrial peptide chain release factor that directs the termination of translation in response to the peptide chain termination codons UAA and UAG. The protein is Peptide chain release factor 1-like, mitochondrial (Mtrf1l) of Rattus norvegicus (Rat).